Here is a 265-residue protein sequence, read N- to C-terminus: Oxygen-evolving enhancer protein 2-2, chloroplastic (265 aa).

The transit peptide at 1 to 79 (MASTQCFLHH…VGSKVSPADA (79 aa)) directs the protein to the chloroplast.

Belongs to the PsbP family.

It is found in the plastid. The protein resides in the chloroplast thylakoid membrane. May be involved in the regulation of photosystem II. This is Oxygen-evolving enhancer protein 2-2, chloroplastic (PSBP2) from Nicotiana tabacum (Common tobacco).